The primary structure comprises 279 residues: Syntaxin-21 (279 aa).

The segment at 1–34 is disordered; the sequence is MSFQDLEAGTRSPAPNRFTGGRQQRPSSRGDPSQ. An N-acetylserine modification is found at Ser-2. Over 2–258 the chain is Cytoplasmic; sequence SFQDLEAGTR…AKTQRSNSSL (257 aa). The segment covering 21-31 has biased composition (polar residues); it reads GRQQRPSSRGD. A coiled-coil region spans residues 65–94; it reads ELRDKLQKTRLQISELVKNTSAKLKEASEA. The t-SNARE coiled-coil homology domain maps to 186–248; that stretch reads EAIIEEREQG…TQATVQLRKA (63 aa). Residues 259-279 traverse the membrane as a helical; Anchor for type IV membrane protein segment; sequence TCLLILIFGIVLLIVIIVVLV.

It belongs to the syntaxin family. In terms of assembly, interacts with VTI11 and SYP51 to form a t-SNARE complex and with alpha-SNAP to form a 20S complex. In terms of tissue distribution, a high level expression is seen in the roots while a low level expression is seen in the leaves.

The protein localises to the prevacuolar compartment membrane. In terms of biological role, may function in the docking or fusion of transport vesicles with the prevacuolar membrane. This chain is Syntaxin-21 (SYP21), found in Arabidopsis thaliana (Mouse-ear cress).